The sequence spans 140 residues: MAIERTFSILKPDATKRNLTGAINALIEQAGLRIVAQKRIRMTRDQAETFYAVHKARPFFGELVDFMVSGPVVVQVLEGEGAVLKYRDVMGATDPSKAADGTIRKAHAQSIGENSVHGSDAPETAAIEIAQFFSGNEIVG.

ATP contacts are provided by K11, F59, R87, T93, R104, and N114. Catalysis depends on H117, which acts as the Pros-phosphohistidine intermediate.

This sequence belongs to the NDK family. As to quaternary structure, homotetramer. The cofactor is Mg(2+).

The protein localises to the cytoplasm. It carries out the reaction a 2'-deoxyribonucleoside 5'-diphosphate + ATP = a 2'-deoxyribonucleoside 5'-triphosphate + ADP. The enzyme catalyses a ribonucleoside 5'-diphosphate + ATP = a ribonucleoside 5'-triphosphate + ADP. Functionally, major role in the synthesis of nucleoside triphosphates other than ATP. The ATP gamma phosphate is transferred to the NDP beta phosphate via a ping-pong mechanism, using a phosphorylated active-site intermediate. The polypeptide is Nucleoside diphosphate kinase (Rhodopseudomonas palustris (strain BisB18)).